A 366-amino-acid chain; its full sequence is D-alanine--D-alanine ligase (366 aa).

The ATP-grasp domain maps to 148-357 (KMTFEQAGLA…FPELVDRLIQ (210 aa)). 184-239 (EAALGYPAFVKPANLGSSVGIAKVRSRQELEAALDNAASYDRRLVVEAGVVAREVE) provides a ligand contact to ATP. Mg(2+)-binding residues include Asp310, Glu324, and Asn326.

It belongs to the D-alanine--D-alanine ligase family. It depends on Mg(2+) as a cofactor. Requires Mn(2+) as cofactor.

It is found in the cytoplasm. It catalyses the reaction 2 D-alanine + ATP = D-alanyl-D-alanine + ADP + phosphate + H(+). The protein operates within cell wall biogenesis; peptidoglycan biosynthesis. In terms of biological role, cell wall formation. This chain is D-alanine--D-alanine ligase, found in Nostoc punctiforme (strain ATCC 29133 / PCC 73102).